A 553-amino-acid polypeptide reads, in one-letter code: CTP synthase (553 aa).

Residues Met1–Ile277 form an amidoligase domain region. Ser26 contacts CTP. Ser26 is a binding site for UTP. Residues Gly27 to Ile32 and Asp84 each bind ATP. Mg(2+) is bound by residues Asp84 and Glu152. CTP-binding positions include Asp159 to Glu161, Lys198 to Gln203, and Lys234. Residues Lys198 to Gln203 and Lys234 each bind UTP. Residue Val252 coordinates ATP. In terms of domain architecture, Glutamine amidotransferase type-1 spans Leu307–His544. L-glutamine is bound at residue Gly364. The active-site Nucleophile; for glutamine hydrolysis is Cys391. L-glutamine contacts are provided by residues Leu392–Gln395, Glu415, and Arg472. Residues His517 and Glu519 contribute to the active site.

Belongs to the CTP synthase family. As to quaternary structure, homotetramer.

The protein localises to the cytoplasm. The enzyme catalyses UTP + L-glutamine + ATP + H2O = CTP + L-glutamate + ADP + phosphate + 2 H(+). The catalysed reaction is L-glutamine + H2O = L-glutamate + NH4(+). It carries out the reaction UTP + NH4(+) + ATP = CTP + ADP + phosphate + 2 H(+). It participates in pyrimidine metabolism; CTP biosynthesis via de novo pathway; CTP from UDP: step 2/2. Its activity is regulated as follows. Allosterically activated by GTP, when glutamine is the substrate; GTP has no effect on the reaction when ammonia is the substrate. The allosteric effector GTP functions by stabilizing the protein conformation that binds the tetrahedral intermediate(s) formed during glutamine hydrolysis. Inhibited by the product CTP, via allosteric rather than competitive inhibition. Inhibited by 6-diazo-5-oxo-l-norleucine (DON). Functionally, catalyzes the ATP-dependent amination of UTP to CTP with either L-glutamine or ammonia as the source of nitrogen. Regulates intracellular CTP levels through interactions with the four ribonucleotide triphosphates. This chain is CTP synthase, found in Haloarcula hispanica (strain ATCC 33960 / DSM 4426 / JCM 8911 / NBRC 102182 / NCIMB 2187 / VKM B-1755).